A 261-amino-acid chain; its full sequence is Ribosomal RNA small subunit methyltransferase A (261 aa).

6 residues coordinate S-adenosyl-L-methionine: Asn15, Ile17, Gly42, Glu64, Asp90, and Asn109.

The protein belongs to the class I-like SAM-binding methyltransferase superfamily. rRNA adenine N(6)-methyltransferase family. RsmA subfamily.

The protein resides in the cytoplasm. It catalyses the reaction adenosine(1518)/adenosine(1519) in 16S rRNA + 4 S-adenosyl-L-methionine = N(6)-dimethyladenosine(1518)/N(6)-dimethyladenosine(1519) in 16S rRNA + 4 S-adenosyl-L-homocysteine + 4 H(+). In terms of biological role, specifically dimethylates two adjacent adenosines (A1518 and A1519) in the loop of a conserved hairpin near the 3'-end of 16S rRNA in the 30S particle. May play a critical role in biogenesis of 30S subunits. The chain is Ribosomal RNA small subunit methyltransferase A from Wolbachia sp. subsp. Brugia malayi (strain TRS).